We begin with the raw amino-acid sequence, 331 residues long: Type 2 lactosamine alpha-2,3-sialyltransferase (331 aa).

Residues 1–4 (MRGY) are Cytoplasmic-facing. Residues 5–25 (LVAIFLSAVFLYYVLHCILWG) form a helical; Signal-anchor for type II membrane protein membrane-spanning segment. Residues 26 to 331 (TNVYWVAPVE…KNLVINLTQD (306 aa)) are Lumenal-facing. Residues N129, N181, N282, N295, N308, and N327 are each glycosylated (N-linked (GlcNAc...) asparagine).

This sequence belongs to the glycosyltransferase 29 family. As to expression, ubiquitous.

The protein localises to the golgi apparatus membrane. The enzyme catalyses a neolactoside nLc4Cer(d18:1(4E)) + CMP-N-acetyl-beta-neuraminate = a neolactoside IV(3)-alpha-NeuAc-nLc4Cer(d18:1(4E)) + CMP + H(+). It catalyses the reaction a beta-D-galactosyl-(1-&gt;4)-N-acetyl-beta-D-glucosaminyl derivative + CMP-N-acetyl-beta-neuraminate = an N-acetyl-alpha-neuraminyl-(2-&gt;3)-beta-D-galactosyl-(1-&gt;4)-N-acetyl-beta-D-glucosaminyl derivative + CMP + H(+). It carries out the reaction a neolactoside nLc6Cer(d18:1(4E)) + CMP-N-acetyl-beta-neuraminate = a neolactoside VI(3)-alpha-NeuNAc-nLc6Cer(d18:1(4E)) + CMP + H(+). Functionally, transfers the sialyl residue from CMP-N-acetyl-beta-neuraminate to the terminal galactose residue on sugar chains of glycoproteins and glycolipids. It's alpha-2,3-sialyltransferase activity is specific toward type II glycan chains (Galbeta1-4GlcNAc) on glycoproteins and glycolipids such as neolactosides nLc4Cer and nLc6Cer, whose sialyl-products serve as precursors for the Lewis X antigen. Critically involved in the synthesis of functional selectin ligands needed for neutrophil recruitment during inflammation and lymphocyte homing to the lymph nodes. This is Type 2 lactosamine alpha-2,3-sialyltransferase (ST3GAL6) from Homo sapiens (Human).